We begin with the raw amino-acid sequence, 449 residues long: Putative transporter C83.11 (449 aa).

The next 9 helical transmembrane spans lie at 7–27 (LSHILFHEKVGFLLLCLLWYI), 47–67 (VTLTFLQFGFVAFFSAVCLLF), 84–104 (VLYTTLPLSIFQIGGHVFGSL), 109–129 (IPVSTVHTVKALSPLFTVLAY), 136–156 (VYSAMTYFSLVPLTFGVTLAC), 164–184 (IVGLLYALISTCIFVSQNIFG), 205–225 (LNLLLYSSGVAFIVMIPVWLY), 255–275 (ILAFTLLSIISPVAYSIASLI), and 278–298 (IFVIVVSIIWFQQATNFTQGS). Phosphoserine occurs at positions 348 and 352. Phosphotyrosine is present on tyrosine 355. Over residues 382 to 415 (NSVYSNEGVTSSVSGNATPASVRQSTQNDFSNSN) the composition is skewed to polar residues. Residues 382-416 (NSVYSNEGVTSSVSGNATPASVRQSTQNDFSNSNI) form a disordered region.

Belongs to the TPT transporter family.

It is found in the membrane. In Schizosaccharomyces pombe (strain 972 / ATCC 24843) (Fission yeast), this protein is Putative transporter C83.11.